Consider the following 225-residue polypeptide: Phosphoribosylformylglycinamidine synthase subunit PurQ (225 aa).

The region spanning 6–225 is the Glutamine amidotransferase type-1 domain; sequence FGVVVFPGSN…WQSILRSFAA (220 aa). Residue C89 is the Nucleophile of the active site. Active-site residues include H198 and E200.

In terms of assembly, part of the FGAM synthase complex composed of 1 PurL, 1 PurQ and 2 PurS subunits.

Its subcellular location is the cytoplasm. It carries out the reaction N(2)-formyl-N(1)-(5-phospho-beta-D-ribosyl)glycinamide + L-glutamine + ATP + H2O = 2-formamido-N(1)-(5-O-phospho-beta-D-ribosyl)acetamidine + L-glutamate + ADP + phosphate + H(+). The catalysed reaction is L-glutamine + H2O = L-glutamate + NH4(+). It participates in purine metabolism; IMP biosynthesis via de novo pathway; 5-amino-1-(5-phospho-D-ribosyl)imidazole from N(2)-formyl-N(1)-(5-phospho-D-ribosyl)glycinamide: step 1/2. Its function is as follows. Part of the phosphoribosylformylglycinamidine synthase complex involved in the purines biosynthetic pathway. Catalyzes the ATP-dependent conversion of formylglycinamide ribonucleotide (FGAR) and glutamine to yield formylglycinamidine ribonucleotide (FGAM) and glutamate. The FGAM synthase complex is composed of three subunits. PurQ produces an ammonia molecule by converting glutamine to glutamate. PurL transfers the ammonia molecule to FGAR to form FGAM in an ATP-dependent manner. PurS interacts with PurQ and PurL and is thought to assist in the transfer of the ammonia molecule from PurQ to PurL. This Synechococcus sp. (strain JA-2-3B'a(2-13)) (Cyanobacteria bacterium Yellowstone B-Prime) protein is Phosphoribosylformylglycinamidine synthase subunit PurQ.